The sequence spans 432 residues: 3-phosphoshikimate 1-carboxyvinyltransferase (432 aa).

3-phosphoshikimate-binding residues include lysine 23, serine 24, and arginine 28. Residue lysine 23 coordinates phosphoenolpyruvate. 2 residues coordinate phosphoenolpyruvate: glycine 99 and arginine 127. 7 residues coordinate 3-phosphoshikimate: serine 172, serine 173, glutamine 174, serine 200, aspartate 317, asparagine 341, and lysine 345. Phosphoenolpyruvate is bound at residue glutamine 174. Aspartate 317 acts as the Proton acceptor in catalysis. Positions 349, 391, and 416 each coordinate phosphoenolpyruvate.

This sequence belongs to the EPSP synthase family. Monomer.

It localises to the cytoplasm. The enzyme catalyses 3-phosphoshikimate + phosphoenolpyruvate = 5-O-(1-carboxyvinyl)-3-phosphoshikimate + phosphate. It functions in the pathway metabolic intermediate biosynthesis; chorismate biosynthesis; chorismate from D-erythrose 4-phosphate and phosphoenolpyruvate: step 6/7. Its function is as follows. Catalyzes the transfer of the enolpyruvyl moiety of phosphoenolpyruvate (PEP) to the 5-hydroxyl of shikimate-3-phosphate (S3P) to produce enolpyruvyl shikimate-3-phosphate and inorganic phosphate. This chain is 3-phosphoshikimate 1-carboxyvinyltransferase, found in Blochmanniella pennsylvanica (strain BPEN).